Consider the following 151-residue polypeptide: UPF0251 protein Ctha_0452 (151 aa).

Belongs to the UPF0251 family.

The sequence is that of UPF0251 protein Ctha_0452 from Chloroherpeton thalassium (strain ATCC 35110 / GB-78).